Here is a 130-residue protein sequence, read N- to C-terminus: Histone H2A type 1-D (130 aa).

The interval 1 to 22 (MSGRGKQGGKARAKAKTRSSRA) is disordered. Position 2 is an N-acetylserine (S2). At S2 the chain carries Phosphoserine; by RPS6KA5. R4 is modified (citrulline; alternate). A Symmetric dimethylarginine; by PRMT5; alternate modification is found at R4. N6-(2-hydroxyisobutyryl)lysine; alternate occurs at positions 6 and 10. An N6-acetyllysine; alternate modification is found at K6. Over residues 7–19 (QGGKARAKAKTRS) the composition is skewed to basic residues. N6-(beta-hydroxybutyryl)lysine; alternate is present on residues K10 and K14. The residue at position 10 (K10) is an N6-lactoyllysine; alternate. N6-succinyllysine; alternate is present on K10. K14 is covalently cross-linked (Glycyl lysine isopeptide (Lys-Gly) (interchain with G-Cter in ubiquitin); alternate). Residue K16 forms a Glycyl lysine isopeptide (Lys-Gly) (interchain with G-Cter in ubiquitin) linkage. K37 is subject to N6-(2-hydroxyisobutyryl)lysine; alternate. Residue K37 is modified to N6-(beta-hydroxybutyryl)lysine; alternate. K37 carries the N6-crotonyllysine; alternate modification. 2 positions are modified to N6-(2-hydroxyisobutyryl)lysine: K75 and K76. K96 is modified (N6-(2-hydroxyisobutyryl)lysine; alternate). At K96 the chain carries N6-(beta-hydroxybutyryl)lysine; alternate. Position 96 is an N6-succinyllysine; alternate (K96). K96 is modified (N6-glutaryllysine; alternate). Position 100 is an N6-glutaryllysine (K100). Residue Q105 is modified to N5-methylglutamine. Position 119 is an N6-(2-hydroxyisobutyryl)lysine; alternate (K119). N6-(beta-hydroxybutyryl)lysine; alternate is present on K119. K119 and K120 each carry N6-crotonyllysine; alternate. N6-glutaryllysine; alternate is present on residues K119 and K120. K120 is covalently cross-linked (Glycyl lysine isopeptide (Lys-Gly) (interchain with G-Cter in ubiquitin); alternate). At T121 the chain carries Phosphothreonine; by DCAF1. Residue K126 is modified to N6-crotonyllysine; alternate. K126 bears the N6-glutaryllysine; alternate mark.

Belongs to the histone H2A family. In terms of assembly, the nucleosome is a histone octamer containing two molecules each of H2A, H2B, H3 and H4 assembled in one H3-H4 heterotetramer and two H2A-H2B heterodimers. The octamer wraps approximately 147 bp of DNA. In terms of processing, deiminated on Arg-4 in granulocytes upon calcium entry. Post-translationally, monoubiquitination of Lys-120 (H2AK119Ub) by RING1, TRIM37 and RNF2/RING2 complex gives a specific tag for epigenetic transcriptional repression and participates in X chromosome inactivation of female mammals. It is involved in the initiation of both imprinted and random X inactivation. Ubiquitinated H2A is enriched in inactive X chromosome chromatin. Ubiquitination of H2A functions downstream of methylation of 'Lys-27' of histone H3 (H3K27me). H2AK119Ub by RNF2/RING2 can also be induced by ultraviolet and may be involved in DNA repair. Monoubiquitination of Lys-120 (H2AK119Ub) by TRIM37 may promote transformation of cells in a number of breast cancers. Following DNA double-strand breaks (DSBs), it is ubiquitinated through 'Lys-63' linkage of ubiquitin moieties by the E2 ligase UBE2N and the E3 ligases RNF8 and RNF168, leading to the recruitment of repair proteins to sites of DNA damage. Ubiquitination at Lys-14 and Lys-16 (H2AK13Ub and H2AK15Ub, respectively) in response to DNA damage is initiated by RNF168 that mediates monoubiquitination at these 2 sites, and 'Lys-63'-linked ubiquitin are then conjugated to monoubiquitin; RNF8 is able to extend 'Lys-63'-linked ubiquitin chains in vitro. Deubiquitinated by USP51 at Lys-14 and Lys-16 (H2AK13Ub and H2AK15Ub, respectively) after damaged DNA is repaired. H2AK119Ub and ionizing radiation-induced 'Lys-63'-linked ubiquitination (H2AK13Ub and H2AK15Ub) are distinct events. Phosphorylation on Ser-2 (H2AS1ph) is enhanced during mitosis. Phosphorylation on Ser-2 by RPS6KA5/MSK1 directly represses transcription. Acetylation of H3 inhibits Ser-2 phosphorylation by RPS6KA5/MSK1. Phosphorylation at Thr-121 (H2AT120ph) by DCAF1 is present in the regulatory region of many tumor suppresor genes and down-regulates their transcription. In terms of processing, glutamine methylation at Gln-105 (H2AQ104me) by FBL is specifically dedicated to polymerase I. It is present at 35S ribosomal DNA locus and impairs binding of the FACT complex. Post-translationally, symmetric dimethylation on Arg-4 by the PRDM1/PRMT5 complex may play a crucial role in the germ-cell lineage. Crotonylation (Kcr) is specifically present in male germ cells and marks testis-specific genes in post-meiotic cells, including X-linked genes that escape sex chromosome inactivation in haploid cells. Crotonylation marks active promoters and enhancers and confers resistance to transcriptional repressors. It is also associated with post-meiotically activated genes on autosomes. In terms of processing, lactylated in macrophages by EP300/P300 by using lactoyl-CoA directly derived from endogenous or exogenous lactate, leading to stimulates gene transcription.

Its subcellular location is the nucleus. It is found in the chromosome. Core component of nucleosome. Nucleosomes wrap and compact DNA into chromatin, limiting DNA accessibility to the cellular machineries which require DNA as a template. Histones thereby play a central role in transcription regulation, DNA repair, DNA replication and chromosomal stability. DNA accessibility is regulated via a complex set of post-translational modifications of histones, also called histone code, and nucleosome remodeling. This Homo sapiens (Human) protein is Histone H2A type 1-D.